A 258-amino-acid polypeptide reads, in one-letter code: Alpha-fibrinogenase albofibrase (258 aa).

Residues 1-18 (MVLIRVLANLLILQLSYA) form the signal peptide. Positions 19-24 (QKSSEL) are excised as a propeptide. The 225-residue stretch at 25–249 (VVGGDECNIN…YNDWIQSIIA (225 aa)) folds into the Peptidase S1 domain. Cystine bridges form between C31–C163, C50–C66, C98–C256, C142–C210, C174–C189, and C200–C225. An N-linked (GlcNAc...) asparagine glycan is attached at N44. Active-site charge relay system residues include H65 and D110. S204 (charge relay system) is an active-site residue.

Belongs to the peptidase S1 family. Snake venom subfamily. In terms of assembly, monomer. Expressed by the venom gland.

The protein localises to the secreted. The recombinant protein has fibrinogenolytic activity against the Aalpha chain (FGA) of fibrinogen. Activates plasminogen (PLG) (is 4-fold less active than urokinase). Has weak thrombin-like enzyme activity. Has enzymatic activity against a trypsin-like substrate (S-3013) and shows a weaker activity on an activated protein C substrate (S-3125). In Trimeresurus albolabris (White-lipped pit viper), this protein is Alpha-fibrinogenase albofibrase.